We begin with the raw amino-acid sequence, 326 residues long: Protein SEH1 (326 aa).

5 WD repeats span residues 7-46 (TLDSGTTCSSWNQSGDRLAAGSLNGKLSIYESSTSSSSTF), 54-95 (VSES…AHGL), 105-146 (NKSS…ELKN), 224-266 (DKGD…DLEG), and 278-317 (GHQGEVWQMEWDMSGMTLASTGSDGMVKLWQSNLNGEWHE).

The protein belongs to the WD repeat SEC13 family. As to quaternary structure, part of the nuclear pore complex (NPC). The NPC has an eight-fold symmetrical structure comprising a central transport channel and two rings, the cytoplasmic and nuclear rings, to which eight filaments are attached. The cytoplasmic filaments have loose ends, while the nuclear filaments are joined in a distal ring, forming a nuclear basket. NPCs are highly dynamic in configuration and composition, and can be devided in 3 subcomplexes, the NUP62 subcomplex, the NUP107-160 subcomplex and the NUP93 subcomplex, containing approximately 30 different nucleoporin proteins.

The protein resides in the nucleus envelope. The protein localises to the nucleus. Its subcellular location is the cytoplasm. It localises to the nuclear pore complex. In terms of biological role, required for proper export of mRNAs from the nucleus to the cytoplasm. This Arabidopsis thaliana (Mouse-ear cress) protein is Protein SEH1.